Here is a 470-residue protein sequence, read N- to C-terminus: Siroheme synthase (470 aa).

The segment at Met-1–Met-203 is precorrin-2 dehydrogenase /sirohydrochlorin ferrochelatase. NAD(+) is bound by residues Glu-22 to Val-23 and Pro-43 to Glu-44. Ser-128 carries the post-translational modification Phosphoserine. Residues Gly-216–Asp-470 are uroporphyrinogen-III C-methyltransferase. Position 225 (Pro-225) interacts with S-adenosyl-L-methionine. The active-site Proton acceptor is Asp-248. The active-site Proton donor is the Lys-270. S-adenosyl-L-methionine is bound by residues Gly-301–Asp-303, Met-383, and Ala-412.

In the N-terminal section; belongs to the precorrin-2 dehydrogenase / sirohydrochlorin ferrochelatase family. It in the C-terminal section; belongs to the precorrin methyltransferase family.

The catalysed reaction is uroporphyrinogen III + 2 S-adenosyl-L-methionine = precorrin-2 + 2 S-adenosyl-L-homocysteine + H(+). It carries out the reaction precorrin-2 + NAD(+) = sirohydrochlorin + NADH + 2 H(+). The enzyme catalyses siroheme + 2 H(+) = sirohydrochlorin + Fe(2+). It functions in the pathway cofactor biosynthesis; adenosylcobalamin biosynthesis; precorrin-2 from uroporphyrinogen III: step 1/1. The protein operates within cofactor biosynthesis; adenosylcobalamin biosynthesis; sirohydrochlorin from precorrin-2: step 1/1. Its pathway is porphyrin-containing compound metabolism; siroheme biosynthesis; precorrin-2 from uroporphyrinogen III: step 1/1. It participates in porphyrin-containing compound metabolism; siroheme biosynthesis; siroheme from sirohydrochlorin: step 1/1. It functions in the pathway porphyrin-containing compound metabolism; siroheme biosynthesis; sirohydrochlorin from precorrin-2: step 1/1. Functionally, multifunctional enzyme that catalyzes the SAM-dependent methylations of uroporphyrinogen III at position C-2 and C-7 to form precorrin-2 via precorrin-1. Then it catalyzes the NAD-dependent ring dehydrogenation of precorrin-2 to yield sirohydrochlorin. Finally, it catalyzes the ferrochelation of sirohydrochlorin to yield siroheme. The sequence is that of Siroheme synthase from Chromobacterium violaceum (strain ATCC 12472 / DSM 30191 / JCM 1249 / CCUG 213 / NBRC 12614 / NCIMB 9131 / NCTC 9757 / MK).